A 729-amino-acid chain; its full sequence is Fatty acid oxidation complex subunit alpha (729 aa).

The interval 1–189 (MLYQGETLQL…KVGLVDAVVA (189 aa)) is enoyl-CoA hydratase/isomerase. Asp-296 is a substrate binding site. A 3-hydroxyacyl-CoA dehydrogenase region spans residues 311–729 (EAPKQAAVLG…LSDVSTGQPA (419 aa)). NAD(+) contacts are provided by residues Met-324, Asp-343, 400-402 (VVE), Lys-407, and Ser-429. Residue His-450 is the For 3-hydroxyacyl-CoA dehydrogenase activity of the active site. NAD(+) is bound at residue Asn-453. 2 residues coordinate substrate: Asn-500 and Tyr-660.

This sequence in the N-terminal section; belongs to the enoyl-CoA hydratase/isomerase family. It in the C-terminal section; belongs to the 3-hydroxyacyl-CoA dehydrogenase family. Heterotetramer of two alpha chains (FadB) and two beta chains (FadA).

The catalysed reaction is a (3S)-3-hydroxyacyl-CoA + NAD(+) = a 3-oxoacyl-CoA + NADH + H(+). It carries out the reaction a (3S)-3-hydroxyacyl-CoA = a (2E)-enoyl-CoA + H2O. It catalyses the reaction a 4-saturated-(3S)-3-hydroxyacyl-CoA = a (3E)-enoyl-CoA + H2O. The enzyme catalyses (3S)-3-hydroxybutanoyl-CoA = (3R)-3-hydroxybutanoyl-CoA. The catalysed reaction is a (3Z)-enoyl-CoA = a 4-saturated (2E)-enoyl-CoA. It carries out the reaction a (3E)-enoyl-CoA = a 4-saturated (2E)-enoyl-CoA. Its pathway is lipid metabolism; fatty acid beta-oxidation. In terms of biological role, involved in the aerobic and anaerobic degradation of long-chain fatty acids via beta-oxidation cycle. Catalyzes the formation of 3-oxoacyl-CoA from enoyl-CoA via L-3-hydroxyacyl-CoA. It can also use D-3-hydroxyacyl-CoA and cis-3-enoyl-CoA as substrate. This chain is Fatty acid oxidation complex subunit alpha, found in Serratia proteamaculans (strain 568).